The sequence spans 108 residues: MSFPRRPKVTKSDIVDQISLNIRNNNLKLEKKYIRLVIDAFFEELKSNLCSNNVIEFRSFGTFEVRKRKGRLNARNPQTGEYVKVLDHHVAYFRPGKDLKERVWGIKG.

It belongs to the bacterial histone-like protein family.

Functionally, histone-like DNA-binding protein which is capable of wrapping DNA to stabilize it, and thus to prevent its denaturation under extreme environmental conditions. This is DNA-binding protein HBbu (hbb) from Borreliella afzelii (Borrelia afzelii).